The following is a 74-amino-acid chain: Large ribosomal subunit protein bL31 (74 aa).

This sequence belongs to the bacterial ribosomal protein bL31 family. Type A subfamily. In terms of assembly, part of the 50S ribosomal subunit.

Functionally, binds the 23S rRNA. This is Large ribosomal subunit protein bL31 from Xanthobacter autotrophicus (strain ATCC BAA-1158 / Py2).